The chain runs to 591 residues: Probable auxin efflux carrier component 3b (591 aa).

At 1–6 (MISWHE) the chain is on the extracellular side. A helical transmembrane segment spans residues 7-27 (LYMVLSAVVPLYVAMMVAYGS). Over 28–38 (VRWWGVLTPEQ) the chain is Cytoplasmic. Residues 39–59 (CSGINRFVAVIAVPLLSFHFI) traverse the membrane as a helical segment. A (indol-3-yl)acetate-binding site is contributed by V51. The Extracellular segment spans residues 60–70 (SSSDPYAMNLR). A helical membrane pass occupies residues 71 to 93 (FVAADTLQKVLVLAALAAWSRFP). Residues 94 to 107 (ARFVPPAWPPLDCS) are Cytoplasmic-facing. The chain crosses the membrane as a helical span at residues 108–128 (ITLFSVSTLPNTLVMGIPLLV). (indol-3-yl)acetate is bound by residues N118 and L120. The Extracellular portion of the chain corresponds to 129-137 (SMYGPYSGD). Residues 138–158 (LMVQIVVLQSIVWYTLLLFLF) form a helical membrane-spanning segment. Residue Y151 participates in (indol-3-yl)acetate binding. Residues 159 to 450 (EFRAARVLIA…LIRNPNTYAS (292 aa)) lie on the Cytoplasmic side of the membrane. Polar residues-rich tracts occupy residues 243-254 (SRNATPRGSTFT) and 283-292 (SSSRQHTPRP). Disordered stretches follow at residues 243–269 (SRNA…SALR), 283–313 (SSSR…APTN), 344–374 (ETRR…GERA), and 392–420 (AGAK…RARG). Over residues 395-407 (KTEQQTTAVTTTT) the composition is skewed to low complexity. The chain crosses the membrane as a helical span at residues 451–471 (LIGLTWSLIAFRFHITMPIIV). Residues 472 to 474 (AKS) are Extracellular-facing. Residues 475-495 (ISILSDAGLGMAMFSLGLFMA) traverse the membrane as a helical segment. Over 496 to 511 (TQPKIIACGYSVAAAS) the chain is Cytoplasmic. Residues 512 to 532 (MGVRFFFGPAIMAAASAAVGI) form a helical membrane-spanning segment. Topologically, residues 533 to 535 (RGT) are extracellular. The chain crosses the membrane as a helical span at residues 536-556 (LLRIAIVQAALPQGIVPFVFA). Residues I550 and V551 each coordinate (indol-3-yl)acetate. Residues 557 to 568 (KEYNLHATILCT) are Cytoplasmic-facing. A helical transmembrane segment spans residues 569–589 (LVIFGMLIALPITLVYYIILG). At 590–591 (LL) the chain is on the extracellular side.

This sequence belongs to the auxin efflux carrier (TC 2.A.69.1) family. In terms of assembly, homodimer. In terms of tissue distribution, expressed in stem bases and leaves.

The protein localises to the membrane. Functionally, may act as a component of the auxin efflux carrier. This chain is Probable auxin efflux carrier component 3b, found in Oryza sativa subsp. japonica (Rice).